A 263-amino-acid polypeptide reads, in one-letter code: Hydroxyethylthiazole kinase 2 (263 aa).

Met42 contacts substrate. ATP-binding residues include Lys118 and Thr164. Gly191 contributes to the substrate binding site.

The protein belongs to the Thz kinase family. It depends on Mg(2+) as a cofactor.

The catalysed reaction is 5-(2-hydroxyethyl)-4-methylthiazole + ATP = 4-methyl-5-(2-phosphooxyethyl)-thiazole + ADP + H(+). The protein operates within cofactor biosynthesis; thiamine diphosphate biosynthesis; 4-methyl-5-(2-phosphoethyl)-thiazole from 5-(2-hydroxyethyl)-4-methylthiazole: step 1/1. Catalyzes the phosphorylation of the hydroxyl group of 4-methyl-5-beta-hydroxyethylthiazole (THZ). The chain is Hydroxyethylthiazole kinase 2 from Clostridium botulinum (strain Loch Maree / Type A3).